A 185-amino-acid polypeptide reads, in one-letter code: Ribosome-recycling factor (185 aa).

Residues 142 to 164 (IKKDGDAGEDDVTRAEKDLDKST) show a composition bias toward basic and acidic residues. A disordered region spans residues 142 to 173 (IKKDGDAGEDDVTRAEKDLDKSTHQYTSQVDD).

The protein belongs to the RRF family.

The protein resides in the cytoplasm. In terms of biological role, responsible for the release of ribosomes from messenger RNA at the termination of protein biosynthesis. May increase the efficiency of translation by recycling ribosomes from one round of translation to another. This Mycolicibacterium gilvum (strain PYR-GCK) (Mycobacterium gilvum (strain PYR-GCK)) protein is Ribosome-recycling factor.